The sequence spans 202 residues: Glycerol-3-phosphate acyltransferase (202 aa).

Transmembrane regions (helical) follow at residues 2 to 22 (MIIV…GFVI), 54 to 74 (FLVT…PLWL), 85 to 105 (FFTN…YPVY), 120 to 140 (VVLG…FIIL), 141 to 161 (KIFK…VIGS), and 162 to 182 (LIIQ…ILII).

The protein belongs to the PlsY family. Probably interacts with PlsX.

The protein resides in the cell membrane. The catalysed reaction is an acyl phosphate + sn-glycerol 3-phosphate = a 1-acyl-sn-glycero-3-phosphate + phosphate. It functions in the pathway lipid metabolism; phospholipid metabolism. Functionally, catalyzes the transfer of an acyl group from acyl-phosphate (acyl-PO(4)) to glycerol-3-phosphate (G3P) to form lysophosphatidic acid (LPA). This enzyme utilizes acyl-phosphate as fatty acyl donor, but not acyl-CoA or acyl-ACP. The sequence is that of Glycerol-3-phosphate acyltransferase from Staphylococcus aureus (strain bovine RF122 / ET3-1).